The sequence spans 307 residues: Trehalose transport system permease protein SugA (307 aa).

6 helical membrane passes run 25–45, 89–109, 123–143, 168–188, 217–237, and 272–292; these read LAFM…AYPI, LAIT…LALV, AVLI…YYAW, LGIV…LLLL, ILPM…LDAF, and LGSA…FIFI. Residues 85 to 291 enclose the ABC transmembrane type-1 domain; that stretch reads LAVTLAITAV…GCVAVIAFIF (207 aa).

It belongs to the binding-protein-dependent transport system permease family. As to quaternary structure, the complex is composed of two ATP-binding proteins (SugC), two transmembrane proteins (Suga and SugB) and a solute-binding protein (LpqY).

The protein localises to the cell inner membrane. Functionally, part of the ABC transporter complex LpqY-SugA-SugB-SugC, which is highly specific for uptake of trehalose. Involved in the recycling of extracellular trehalose released from trehalose-containing molecules synthesized by M.tuberculosis. Trehalose uptake is essential for virulence. Probably responsible for the translocation of the substrate across the membrane. In Mycobacterium tuberculosis (strain CDC 1551 / Oshkosh), this protein is Trehalose transport system permease protein SugA (sugA).